Consider the following 119-residue polypeptide: Small ribosomal subunit protein uS10 (119 aa).

It belongs to the universal ribosomal protein uS10 family. As to quaternary structure, component of the 40S small ribosomal subunit.

It localises to the cytoplasm. Component of the small ribosomal subunit. The ribosome is a large ribonucleoprotein complex responsible for the synthesis of proteins in the cell. The chain is Small ribosomal subunit protein uS10 (rps20) from Xenopus laevis (African clawed frog).